Here is a 185-residue protein sequence, read N- to C-terminus: F-box protein At1g61340 (185 aa).

An F-box domain is found at 78 to 126 (SRELEDLPLDILVRIICGVEHEDLKQLFHVSKTIREATMIAKQSHFAYS).

The chain is F-box protein At1g61340 from Arabidopsis thaliana (Mouse-ear cress).